Here is a 120-residue protein sequence, read N- to C-terminus: Large ribosomal subunit protein uL18 (120 aa).

The protein belongs to the universal ribosomal protein uL18 family. As to quaternary structure, part of the 50S ribosomal subunit; part of the 5S rRNA/L5/L18/L25 subcomplex. Contacts the 5S and 23S rRNAs.

This is one of the proteins that bind and probably mediate the attachment of the 5S RNA into the large ribosomal subunit, where it forms part of the central protuberance. The protein is Large ribosomal subunit protein uL18 of Bartonella henselae (strain ATCC 49882 / DSM 28221 / CCUG 30454 / Houston 1) (Rochalimaea henselae).